The chain runs to 174 residues: Peroxisome assembly protein 22 (174 aa).

A helical membrane pass occupies residues 9-27; the sequence is GYLAIIAAVSIGAAAYLWW.

It belongs to the peroxin-22 family.

The protein resides in the peroxisome membrane. Functionally, involved in peroxisome biogenesis. This chain is Peroxisome assembly protein 22 (PEX22), found in Candida glabrata (strain ATCC 2001 / BCRC 20586 / JCM 3761 / NBRC 0622 / NRRL Y-65 / CBS 138) (Yeast).